Consider the following 101-residue polypeptide: Small ribosomal subunit protein uS14A (101 aa).

The interval 31–69 is disordered; it reads IAAPGSSPEERAAAQQELRRQPRDASATRLRNRDAVDGR. Over residues 38–53 the composition is skewed to basic and acidic residues; that stretch reads PEERAAAQQELRRQPR.

It belongs to the universal ribosomal protein uS14 family. In terms of assembly, part of the 30S ribosomal subunit. Contacts proteins S3 and S10.

Its function is as follows. Binds 16S rRNA, required for the assembly of 30S particles and may also be responsible for determining the conformation of the 16S rRNA at the A site. The protein is Small ribosomal subunit protein uS14A of Saccharopolyspora erythraea (strain ATCC 11635 / DSM 40517 / JCM 4748 / NBRC 13426 / NCIMB 8594 / NRRL 2338).